We begin with the raw amino-acid sequence, 149 residues long: Transcriptional regulator MraZ (149 aa).

SpoVT-AbrB domains are found at residues 6-52 (RSYR…TPED) and 81-124 (VEEL…SEEE).

This sequence belongs to the MraZ family. Forms oligomers.

The protein localises to the cytoplasm. It localises to the nucleoid. The sequence is that of Transcriptional regulator MraZ from Oleidesulfovibrio alaskensis (strain ATCC BAA-1058 / DSM 17464 / G20) (Desulfovibrio alaskensis).